A 212-amino-acid chain; its full sequence is Small ribosomal subunit protein uS2 (212 aa).

The tract at residues 190–212 is disordered; it reads LSPDAPEDQPAPVSEFETKVKMV.

Belongs to the universal ribosomal protein uS2 family.

This Ignicoccus hospitalis (strain KIN4/I / DSM 18386 / JCM 14125) protein is Small ribosomal subunit protein uS2.